Here is a 712-residue protein sequence, read N- to C-terminus: Envelope glycoprotein gp160 (712 aa).

An N-terminal signal peptide occupies residues 1 to 24 (MCGRNQLFVASLLASACLIYCVQY). Topologically, residues 25 to 673 (VTVFYGVPVW…LTSWIKYIQY (649 aa)) are extracellular. Asn36 carries an N-linked (GlcNAc...) asparagine; by host glycan. Cysteines 43 and 56 form a disulfide. N-linked (GlcNAc...) asparagine; by host glycans are attached at residues Asn69, Asn78, Asn113, Asn119, Asn131, Asn137, Asn145, Asn160, Asn173, Asn200, Asn232, Asn235, Asn242, Asn266, Asn272, Asn283, Asn294, Asn304, Asn359, Asn392, Asn402, Asn405, Asn442, Asn457, and Asn460. 5 cysteine pairs are disulfide-bonded: Cys100-Cys208, Cys107-Cys199, Cys112-Cys157, Cys221-Cys251, and Cys231-Cys243. A V1 region spans residues 112 to 156 (CNSTTAKNTTSTPTTTTTANTTIGENSSCIRTDNCTGLGEEEMVD). The tract at residues 157–199 (CQFNMTGLERDKKKLYNETWYSKDVVCESKDTKKEKTCYMNHC) is V2. The tract at residues 299-331 (CKRPGNKTVVPITLMSGLVFHSQPINRRPRQAW) is V3. A disulfide bridge connects residues Cys299 and Cys332. Disulfide bonds link Cys384–Cys441 and Cys391–Cys414. The V4 stretch occupies residues 391-414 (CNMTWFLNWVENRTNQTQHNYVPC). The V5 stretch occupies residues 457-463 (NQTNITF). Positions 506–526 (GVFVLGFLGFLTTAGAAMGAA) are fusion peptide. The segment at 569–585 (LQARVTAIEKYLKDQAQ) is immunosuppression. Asn605, Asn614, and Asn630 each carry an N-linked (GlcNAc...) asparagine; by host glycan. A coiled-coil region spans residues 614 to 646 (NITWQEWEQRIRNLEANISESLEQAQIQQEKNM). The interval 651–672 (KLNSWDVFSNWFDLTSWIKYIQ) is MPER; binding to GalCer. Residues 674–694 (GVYIVVGIIVLRMVIYVVQML) traverse the membrane as a helical segment. The Cytoplasmic segment spans residues 695–712 (SRLRKGYRPVFSSPPAYS). Residues 701–704 (YRPV) carry the YXXV motif; contains endocytosis signal motif.

The mature envelope protein (Env) consists of a homotrimer of non-covalently associated gp120-gp41 heterodimers. The resulting complex protrudes from the virus surface as a spike. There seems to be as few as 10 spikes on the average virion. Interacts with human CD4, CCR5 and CXCR4, to form a P4HB/PDI-CD4-CXCR4-gp120 complex. Gp120 also interacts with the C-type lectins CD209/DC-SIGN and CLEC4M/DC-SIGNR (collectively referred to as DC-SIGN(R)). Gp120 and gp41 interact with GalCer. As to quaternary structure, the mature envelope protein (Env) consists of a homotrimer of non-covalently associated gp120-gp41 heterodimers. The resulting complex protrudes from the virus surface as a spike. There seems to be as few as 10 spikes on the average virion. Specific enzymatic cleavages in vivo yield mature proteins. Envelope glycoproteins are synthesized as an inactive precursor that is heavily N-glycosylated and processed likely by host cell furin in the Golgi to yield the mature SU and TM proteins. The cleavage site between SU and TM requires the minimal sequence [KR]-X-[KR]-R.

It is found in the virion membrane. Its subcellular location is the host cell membrane. It localises to the host endosome membrane. In terms of biological role, the surface protein gp120 (SU) attaches the virus to the host lymphoid cell by binding to the primary receptor CD4. This interaction induces a structural rearrangement creating a high affinity binding site for a chemokine coreceptor like CXCR4 and/or CCR5. This peculiar 2 stage receptor-interaction strategy allows gp120 to maintain the highly conserved coreceptor-binding site in a cryptic conformation, protected from neutralizing antibodies. Since CD4 also displays a binding site for the disulfide-isomerase P4HB/PDI, a P4HB/PDI-CD4-CXCR4-gp120 complex may form. In that complex, P4HB/PDI could reach and reduce gp120 disulfide bonds, causing major conformational changes in gp120. TXN, another PDI family member could also be involved in disulfide rearrangements in Env during fusion. These changes are transmitted to the transmembrane protein gp41 and are thought to activate its fusogenic potential by unmasking its fusion peptide. The surface protein gp120 is a ligand for CD209/DC-SIGN and CLEC4M/DC-SIGNR, which are respectively found on dendritic cells (DCs), and on endothelial cells of liver sinusoids and lymph node sinuses. These interactions allow capture of viral particles at mucosal surfaces by these cells and subsequent transmission to permissive cells. DCs are professional antigen presenting cells, critical for host immunity by inducing specific immune responses against a broad variety of pathogens. They act as sentinels in various tissues where they take up antigen, process it, and present it to T-cells following migration to lymphoid organs. HIV subverts the migration properties of dendritic cells to gain access to CD4+ T-cells in lymph nodes. Virus transmission to permissive T-cells occurs either in trans (without DCs infection, through viral capture and transmission), or in cis (following DCs productive infection, through the usual CD4-gp120 interaction), thereby inducing a robust infection. In trans infection, bound virions remain infectious over days and it is proposed that they are not degraded, but protected in non-lysosomal acidic organelles within the DCs close to the cell membrane thus contributing to the viral infectious potential during DCs' migration from the periphery to the lymphoid tissues. On arrival at lymphoid tissues, intact virions recycle back to DCs' cell surface allowing virus transmission to CD4+ T-cells. Virion capture also seems to lead to MHC-II-restricted viral antigen presentation, and probably to the activation of HIV-specific CD4+ cells. Functionally, the transmembrane protein gp41 (TM) acts as a class I viral fusion protein. Under the current model, the protein has at least 3 conformational states: pre-fusion native state, pre-hairpin intermediate state, and post-fusion hairpin state. During fusion of viral and target intracellular membranes, the coiled coil regions (heptad repeats) assume a trimer-of-hairpins structure, positioning the fusion peptide in close proximity to the C-terminal region of the ectodomain. The formation of this structure appears to drive apposition and subsequent fusion of viral and target cell membranes. Complete fusion occurs in host cell endosomes and is dynamin-dependent, however some lipid transfer might occur at the plasma membrane. The virus undergoes clathrin-dependent internalization long before endosomal fusion, thus minimizing the surface exposure of conserved viral epitopes during fusion and reducing the efficacy of inhibitors targeting these epitopes. Membranes fusion leads to delivery of the nucleocapsid into the cytoplasm. Its function is as follows. The envelope glycoprotein gp160 precursor down-modulates cell surface CD4 antigen by interacting with it in the endoplasmic reticulum and blocking its transport to the cell surface. In terms of biological role, the gp120-gp41 heterodimer seems to contribute to T-cell depletion during HIV-1 infection. The envelope glycoproteins expressed on the surface of infected cells induce apoptosis through an interaction with uninfected cells expressing the receptor (CD4) and the coreceptors CXCR4 or CCR5. This type of bystander killing may be obtained by at least three distinct mechanisms. First, the interaction between the 2 cells can induce cellular fusion followed by nuclear fusion within the syncytium. Syncytia are condemned to die from apoptosis. Second, the 2 interacting cells may not fuse entirely and simply exchange plasma membrane lipids, after a sort of hemifusion process, followed by rapid death. Third, it is possible that virus-infected cells, on the point of undergoing apoptosis, fuse with CD4-expressing cells, in which case apoptosis is rapidly transmitted from one cell to the other and thus occurs in a sort of contagious fashion. The gp120-gp41 heterodimer allows rapid transcytosis of the virus through CD4 negative cells such as simple epithelial monolayers of the intestinal, rectal and endocervical epithelial barriers. Both gp120 and gp41 specifically recognize glycosphingolipids galactosyl-ceramide (GalCer) or 3' sulfo-galactosyl-ceramide (GalS) present in the lipid rafts structures of epithelial cells. Binding to these alternative receptors allows the rapid transcytosis of the virus through the epithelial cells. This transcytotic vesicle-mediated transport of virions from the apical side to the basolateral side of the epithelial cells does not involve infection of the cells themselves. The polypeptide is Envelope glycoprotein gp160 (env) (Homo sapiens (Human)).